Here is a 980-residue protein sequence, read N- to C-terminus: Conserved oligomeric Golgi complex subunit 1 (980 aa).

Ala-2 carries the post-translational modification N-acetylalanine. At Ser-7 the chain carries Phosphoserine.

The protein belongs to the COG1 family. Component of the conserved oligomeric Golgi complex which is composed of eight different subunits and is required for normal Golgi morphology and localization.

It is found in the golgi apparatus membrane. Its function is as follows. Required for normal Golgi function. This is Conserved oligomeric Golgi complex subunit 1 (COG1) from Homo sapiens (Human).